A 60-amino-acid chain; its full sequence is Large ribosomal subunit protein bL32 (60 aa).

The tract at residues 1 to 60 (MAVQQNKKSRSARDMRRSHDALEASTLSVEKSTGEVHLRHHVSPEGVYRGRKVIDKGADE) is disordered. Basic and acidic residues predominate over residues 11 to 22 (SARDMRRSHDAL).

Belongs to the bacterial ribosomal protein bL32 family.

The polypeptide is Large ribosomal subunit protein bL32 (Ectopseudomonas mendocina (strain ymp) (Pseudomonas mendocina)).